We begin with the raw amino-acid sequence, 274 residues long: Carbonic anhydrase (274 aa).

Zn(2+)-binding residues include cysteine 39, histidine 98, and cysteine 101. The segment at 214-274 (EDEYAPHPNS…QAERIYRGSR (61 aa)) is disordered. Basic and acidic residues-rich tracts occupy residues 234–245 (PGKERPGREKAT) and 261–274 (LPRE…RGSR).

Belongs to the beta-class carbonic anhydrase family. A hexamer formed by a trimer of dimers. Interacts with the first 260 residues of CcmM; both the N-terminal 206 residues and the C-terminal tail contribute to CcmM binding. Interacts with full-length and the N-terminal 249 residues of CcmM. A probable CcmM-CcaA-CcmN complex as well as a CcaA-RuBisCO-CcmM complex can also be isolated. Zn(2+) is required as a cofactor.

It localises to the carboxysome. It carries out the reaction hydrogencarbonate + H(+) = CO2 + H2O. Inhibited by ethoxyzolamide. Functionally, reversible hydration of carbon dioxide. Essential to photosynthetic carbon dioxide fixation, supplies CO(2) to RuBisCO (ribulose bisphosphate carboxylase, rbcL-rbcS) in the carboxysome. This chain is Carbonic anhydrase, found in Synechocystis sp. (strain ATCC 27184 / PCC 6803 / Kazusa).